The following is a 130-amino-acid chain: Large ribosomal subunit protein bL12 (130 aa).

It belongs to the bacterial ribosomal protein bL12 family. Homodimer. Part of the ribosomal stalk of the 50S ribosomal subunit. Forms a multimeric L10(L12)X complex, where L10 forms an elongated spine to which 2 to 4 L12 dimers bind in a sequential fashion. Binds GTP-bound translation factors.

Its function is as follows. Forms part of the ribosomal stalk which helps the ribosome interact with GTP-bound translation factors. Is thus essential for accurate translation. The protein is Large ribosomal subunit protein bL12 of Prochlorococcus marinus (strain SARG / CCMP1375 / SS120).